Here is a 116-residue protein sequence, read N- to C-terminus: Large ribosomal subunit protein bL17 (116 aa).

It belongs to the bacterial ribosomal protein bL17 family. As to quaternary structure, part of the 50S ribosomal subunit. Contacts protein L32.

In Dictyoglomus thermophilum (strain ATCC 35947 / DSM 3960 / H-6-12), this protein is Large ribosomal subunit protein bL17.